We begin with the raw amino-acid sequence, 86 residues long: Triple QxxK/R motif-containing protein (86 aa).

Residues valine 51–leucine 71 form a helical membrane-spanning segment.

This sequence belongs to the TRIQK family.

The protein localises to the endoplasmic reticulum membrane. Its function is as follows. May play a role in cell growth and maintenance of cell morphology. The sequence is that of Triple QxxK/R motif-containing protein (Triqk) from Rattus norvegicus (Rat).